The chain runs to 852 residues: Protein Shroom1 (852 aa).

Methionine 1 carries the post-translational modification N-acetylmethionine. Serine 18 is subject to Phosphoserine. Disordered stretches follow at residues serine 34 to leucine 54, threonine 81 to arginine 109, and alanine 125 to glutamine 218. Phosphothreonine is present on threonine 103. Positions alanine 125–arginine 144 are enriched in low complexity. Serine 133 and serine 137 each carry phosphoserine. Residues leucine 145–glycine 233 enclose the ASD1 domain. Residues valine 152 to arginine 164 are compositionally biased toward basic and acidic residues. 3 positions are modified to phosphoserine: serine 166, serine 190, and serine 224. Disordered regions lie at residues leucine 276–glycine 320, methionine 399–glycine 431, serine 464–glutamate 496, and aspartate 823–threonine 852. Residues threonine 279–serine 289 are compositionally biased toward polar residues. Residues alanine 301–glycine 313 are compositionally biased toward low complexity. The span at arginine 465–isoleucine 479 shows a compositional bias: polar residues. One can recognise an ASD2 domain in the interval glutamate 543–glycine 825. Over residues serine 830–threonine 852 the composition is skewed to pro residues.

The protein belongs to the shroom family. Interacts with F-actin.

The protein localises to the cytoplasm. It localises to the cytoskeleton. In terms of biological role, may be involved in the assembly of microtubule arrays during cell elongation. The sequence is that of Protein Shroom1 (SHROOM1) from Homo sapiens (Human).